Consider the following 62-residue polypeptide: Photosystem II reaction center protein Z (62 aa).

The next 2 helical transmembrane spans lie at 8 to 28 (AIFA…VVFA) and 41 to 61 (FSGT…NSLI).

This sequence belongs to the PsbZ family. PSII is composed of 1 copy each of membrane proteins PsbA, PsbB, PsbC, PsbD, PsbE, PsbF, PsbH, PsbI, PsbJ, PsbK, PsbL, PsbM, PsbT, PsbY, PsbZ, Psb30/Ycf12, at least 3 peripheral proteins of the oxygen-evolving complex and a large number of cofactors. It forms dimeric complexes.

It is found in the plastid. The protein localises to the chloroplast thylakoid membrane. Its function is as follows. May control the interaction of photosystem II (PSII) cores with the light-harvesting antenna, regulates electron flow through the 2 photosystem reaction centers. PSII is a light-driven water plastoquinone oxidoreductase, using light energy to abstract electrons from H(2)O, generating a proton gradient subsequently used for ATP formation. The protein is Photosystem II reaction center protein Z of Acorus gramineus (Dwarf sweet flag).